Here is a 546-residue protein sequence, read N- to C-terminus: Pectinesterase 1 (546 aa).

The first 39 residues, 1–39 (MANPQQPLLIKTHKQNPIISFKILSFVITLFVALFLVAP), serve as a signal peptide directing secretion. Positions 40-229 (YQVEIKHSNL…RKLMESSGKD (190 aa)) are excised as a propeptide. Substrate-binding residues include T308 and Q338. Residues C327 and C354 are joined by a disulfide bond. The active-site Proton donor is D361. The Nucleophile role is filled by D382. A disulfide bridge connects residues C395 and C429. The substrate site is built by R450 and W452.

This sequence in the N-terminal section; belongs to the PMEI family. The protein in the C-terminal section; belongs to the pectinesterase family.

The protein resides in the secreted. It is found in the cell wall. The enzyme catalyses [(1-&gt;4)-alpha-D-galacturonosyl methyl ester](n) + n H2O = [(1-&gt;4)-alpha-D-galacturonosyl](n) + n methanol + n H(+). It participates in glycan metabolism; pectin degradation; 2-dehydro-3-deoxy-D-gluconate from pectin: step 1/5. In terms of biological role, pectinesterase may play a role in cell wall metabolism during fruit growth and development prior to ripening and may be required for preparing cell walls for softening by polygalacturonase during fruit ripening. This chain is Pectinesterase 1 (PME1.9), found in Solanum lycopersicum (Tomato).